Here is a 477-residue protein sequence, read N- to C-terminus: Bifunctional protein HldE (477 aa).

The interval 1-318 (MKVNLPAFER…ENAVRGRADT (318 aa)) is ribokinase. An ATP-binding site is contributed by 195–198 (NLSE). Residue Asp-264 is part of the active site. The segment at 344-477 (MTNGVFDILH…IKKIQTESEK (134 aa)) is cytidylyltransferase.

This sequence in the N-terminal section; belongs to the carbohydrate kinase PfkB family. In the C-terminal section; belongs to the cytidylyltransferase family. Homodimer.

The enzyme catalyses D-glycero-beta-D-manno-heptose 7-phosphate + ATP = D-glycero-beta-D-manno-heptose 1,7-bisphosphate + ADP + H(+). It carries out the reaction D-glycero-beta-D-manno-heptose 1-phosphate + ATP + H(+) = ADP-D-glycero-beta-D-manno-heptose + diphosphate. The protein operates within nucleotide-sugar biosynthesis; ADP-L-glycero-beta-D-manno-heptose biosynthesis; ADP-L-glycero-beta-D-manno-heptose from D-glycero-beta-D-manno-heptose 7-phosphate: step 1/4. It functions in the pathway nucleotide-sugar biosynthesis; ADP-L-glycero-beta-D-manno-heptose biosynthesis; ADP-L-glycero-beta-D-manno-heptose from D-glycero-beta-D-manno-heptose 7-phosphate: step 3/4. In terms of biological role, catalyzes the phosphorylation of D-glycero-D-manno-heptose 7-phosphate at the C-1 position to selectively form D-glycero-beta-D-manno-heptose-1,7-bisphosphate. Its function is as follows. Catalyzes the ADP transfer from ATP to D-glycero-beta-D-manno-heptose 1-phosphate, yielding ADP-D-glycero-beta-D-manno-heptose. This is Bifunctional protein HldE from Salmonella enteritidis PT4 (strain P125109).